A 238-amino-acid chain; its full sequence is Ribosomal RNA small subunit methyltransferase G (238 aa).

Residues glycine 78, phenylalanine 83, 129 to 130 (AE), and arginine 148 contribute to the S-adenosyl-L-methionine site. Residues 217–238 (KKKETPKKYPRKAGTPAKSPIK) form a disordered region.

Belongs to the methyltransferase superfamily. RNA methyltransferase RsmG family.

The protein localises to the cytoplasm. Specifically methylates the N7 position of a guanine in 16S rRNA. The polypeptide is Ribosomal RNA small subunit methyltransferase G (Lactococcus lactis subsp. cremoris (strain SK11)).